The chain runs to 189 residues: Peptidyl-tRNA hydrolase (189 aa).

TRNA is bound at residue H14. H19 serves as the catalytic Proton acceptor. Residues Y64, N66, and N112 each contribute to the tRNA site.

It belongs to the PTH family. As to quaternary structure, monomer.

The protein localises to the cytoplasm. The catalysed reaction is an N-acyl-L-alpha-aminoacyl-tRNA + H2O = an N-acyl-L-amino acid + a tRNA + H(+). Functionally, hydrolyzes ribosome-free peptidyl-tRNAs (with 1 or more amino acids incorporated), which drop off the ribosome during protein synthesis, or as a result of ribosome stalling. Catalyzes the release of premature peptidyl moieties from peptidyl-tRNA molecules trapped in stalled 50S ribosomal subunits, and thus maintains levels of free tRNAs and 50S ribosomes. This is Peptidyl-tRNA hydrolase from Chlorobium phaeobacteroides (strain BS1).